Consider the following 295-residue polypeptide: Perivine-Nbeta-methyltransferase (295 aa).

Residues 76–85 (ILDVGCGKGG) form an SAM motif I region. Residues 138–144 (DGSFELI) carry the Vacuolar targeting signal motif. The SAM motif II stretch occupies residues 139 to 147 (GSFELIFVI). Residues 166-175 (VAAPGAQIVI) form an SAM motif III region.

It belongs to the class I-like SAM-binding methyltransferase superfamily. gTMT family. As to quaternary structure, homodimer. Mainly expressed in young leaves, and, to a lower extent, in mature leaves, flowers, stems and roots (at protein level). Transcripts levels are highest in flowers, moderate in leaves and low in roots and stems.

It is found in the vacuole membrane. It carries out the reaction perivine + S-adenosyl-L-methionine = vobasine + S-adenosyl-L-homocysteine + 2 H(+). It participates in alkaloid biosynthesis; vindoline biosynthesis. Functionally, S-adenosyl-L-methionine-dependent N-methyltransferase involved in the biosynthesis of biologically active monoterpenoid indole alkaloids (MIAs) natural products including vindoline. Catalyzes the conversion of perivine to Nbeta-methylperivine (vobasine) by methylating its N4 nitrogen. Inactive with picrinine as substrate. The protein is Perivine-Nbeta-methyltransferase of Catharanthus roseus (Madagascar periwinkle).